Here is a 366-residue protein sequence, read N- to C-terminus: Chorismate synthase (366 aa).

NADP(+) is bound by residues Arg-48 and Arg-54. FMN is bound by residues Arg-132–Ser-134, Asn-244–Ala-245, Gly-289, Lys-304–Ser-308, and Arg-330.

The protein belongs to the chorismate synthase family. As to quaternary structure, homotetramer. Requires FMNH2 as cofactor.

The catalysed reaction is 5-O-(1-carboxyvinyl)-3-phosphoshikimate = chorismate + phosphate. The protein operates within metabolic intermediate biosynthesis; chorismate biosynthesis; chorismate from D-erythrose 4-phosphate and phosphoenolpyruvate: step 7/7. Its function is as follows. Catalyzes the anti-1,4-elimination of the C-3 phosphate and the C-6 proR hydrogen from 5-enolpyruvylshikimate-3-phosphate (EPSP) to yield chorismate, which is the branch point compound that serves as the starting substrate for the three terminal pathways of aromatic amino acid biosynthesis. This reaction introduces a second double bond into the aromatic ring system. This is Chorismate synthase from Methylorubrum populi (strain ATCC BAA-705 / NCIMB 13946 / BJ001) (Methylobacterium populi).